The primary structure comprises 298 residues: Arginase (298 aa).

Mn(2+) contacts are provided by His-98, Asp-121, His-123, and Asp-125. Substrate contacts are provided by residues 123-127 (HGDLN), 134-136 (SGN), and Asp-177. Mn(2+) is bound by residues Asp-225 and Asp-227. Thr-239 and Glu-270 together coordinate substrate.

The protein belongs to the arginase family. It depends on Mn(2+) as a cofactor.

It catalyses the reaction L-arginine + H2O = urea + L-ornithine. It functions in the pathway nitrogen metabolism; urea cycle; L-ornithine and urea from L-arginine: step 1/1. This is Arginase (rocF) from Brevibacillus brevis (Bacillus brevis).